A 503-amino-acid chain; its full sequence is E3 ubiquitin-protein ligase ariadne-1 (503 aa).

Acidic residues predominate over residues 1-11; the sequence is MDSDNDNDFCD. Residues 1–40 are disordered; it reads MDSDNDNDFCDNVDSGNVSSGDDGDDDFGMEVDLPSSADR. The segment covering 12–21 has biased composition (low complexity); that stretch reads NVDSGNVSSG. Residues 129 to 340 are TRIAD supradomain; the sequence is QCEECEICFS…SSWYNCNRYD (212 aa). Zn(2+) is bound by residues Cys133, Cys136, Cys150, His152, Cys155, Cys158, Cys178, Cys183, Cys223, Cys228, Cys244, Cys246, Cys251, Cys254, His259, Cys264, Cys291, and Cys294. The RING-type 1 zinc finger occupies 133 to 183; it reads CEICFSQLPPDSMAGLECGHRFCMPCWHEYLSTKIVAEGLGQTISCAAHGC. The tract at residues 133 to 201 is important for interaction with Ubc10; it reads CEICFSQLPP…VANLVTDARV (69 aa). The IBR-type zinc-finger motif lies at 203–264; it reads VKYQQLITNS…GENWHDPVKC (62 aa). An RING-type 2; atypical zinc finger spans residues 291–322; sequence CPRCSVTIEKDGGCNHMVCKNQNCKNEFCWVC. Residue Cys304 is part of the active site. 6 residues coordinate Zn(2+): Cys309, Cys314, Cys319, Cys322, His329, and Cys336. The stretch at 341–361 forms a coiled coil; the sequence is EDEAKTARDAQEKLRSSLARY.

Belongs to the RBR family. Ariadne subfamily. In terms of assembly, can form homodimers. Interacts (via RING-type 1 zinc finger) with Ubc10. Interacts with the LINC complex member koi. Interacts with park. Interacts with ari-2. Specifically interacts with isoform ECR-A of EcR. Autophosphorylated. As to expression, widely expressed, with prominent levels in the nervous system and female gonads.

It is found in the cytoplasm. It localises to the nucleus. It carries out the reaction [E2 ubiquitin-conjugating enzyme]-S-ubiquitinyl-L-cysteine + [acceptor protein]-L-lysine = [E2 ubiquitin-conjugating enzyme]-L-cysteine + [acceptor protein]-N(6)-ubiquitinyl-L-lysine.. Functionally, atypical E3 ubiquitin-protein ligase, which catalyzes ubiquitination of target proteins together with ubiquitin-conjugating enzyme E2 Ubc10. Controls the subcellular localization and morphology of muscle nuclei (myonuclei) by regulating the protein levels and distribution of the LINC (LInker of Nucleoskeleton and Cytoskeleton) complex. Functions by mediating the monoubiquitination of the LINC complex subunit koi leading to its subsequent proteasomal degradation. Appears to function, at least partially redundantly, with the RBR E3 ligase family member park in nuclear localization and morphology. Likely to function in metamorphosis by regulating the proteins levels of EcR isoform A (ECR-A) and its heterodimeric partner usp, via the ubiquitination and subsequent degradation of ECR-A. This chain is E3 ubiquitin-protein ligase ariadne-1, found in Drosophila melanogaster (Fruit fly).